The sequence spans 299 residues: Homeobox protein Nkx-2.5 (299 aa).

The segment covering 90–119 has biased composition (basic and acidic residues); sequence KDPKDHKKDICPLQKTLEHDKREAEDPERP. The tract at residues 90-128 is disordered; it reads KDPKDHKKDICPLQKTLEHDKREAEDPERPRQRKRRKPR. A DNA-binding region (homeobox) is located at residues 124-183; that stretch reads RRKPRVLFSQAQVYELERRFKQQKYLSAPERDHLANVLKLTSTQVKIWFQNRRYKCKRQR.

The protein belongs to the NK-2 homeobox family. Homodimer (via the homeobox); binds DNA as homodimer. Heart and gut tissue.

It localises to the nucleus. Its function is as follows. Transcription factor required for the development of the heart and the spleen. Implicated in commitment to and/or differentiation of the myocardial lineage. May regulate the expression of genes involved in cardiogenesis and play a role in the formation of gut and the pharyngeal region. Binds to the core DNA motif of promoter. The chain is Homeobox protein Nkx-2.5 (nkx-2.5) from Xenopus laevis (African clawed frog).